Here is a 686-residue protein sequence, read N- to C-terminus: tRNA 5-methylaminomethyl-2-thiouridine biosynthesis bifunctional protein MnmC (686 aa).

The segment at 1 to 258 is tRNA (mnm(5)s(2)U34)-methyltransferase; that stretch reads MPNIPLRVNS…RRALRRQQLD (258 aa). The FAD-dependent cmnm(5)s(2)U34 oxidoreductase stretch occupies residues 276-686; it reads IGGGVASANL…MRKLIKGKAL (411 aa).

It in the N-terminal section; belongs to the methyltransferase superfamily. tRNA (mnm(5)s(2)U34)-methyltransferase family. The protein in the C-terminal section; belongs to the DAO family. The cofactor is FAD.

The protein resides in the cytoplasm. It catalyses the reaction 5-aminomethyl-2-thiouridine(34) in tRNA + S-adenosyl-L-methionine = 5-methylaminomethyl-2-thiouridine(34) in tRNA + S-adenosyl-L-homocysteine + H(+). Catalyzes the last two steps in the biosynthesis of 5-methylaminomethyl-2-thiouridine (mnm(5)s(2)U) at the wobble position (U34) in tRNA. Catalyzes the FAD-dependent demodification of cmnm(5)s(2)U34 to nm(5)s(2)U34, followed by the transfer of a methyl group from S-adenosyl-L-methionine to nm(5)s(2)U34, to form mnm(5)s(2)U34. The polypeptide is tRNA 5-methylaminomethyl-2-thiouridine biosynthesis bifunctional protein MnmC (Shewanella loihica (strain ATCC BAA-1088 / PV-4)).